Consider the following 199-residue polypeptide: ATP-dependent Clp protease proteolytic subunit (199 aa).

The Nucleophile role is filled by Ser-103. His-128 is a catalytic residue.

The protein belongs to the peptidase S14 family. Fourteen ClpP subunits assemble into 2 heptameric rings which stack back to back to give a disk-like structure with a central cavity, resembling the structure of eukaryotic proteasomes.

It is found in the cytoplasm. It carries out the reaction Hydrolysis of proteins to small peptides in the presence of ATP and magnesium. alpha-casein is the usual test substrate. In the absence of ATP, only oligopeptides shorter than five residues are hydrolyzed (such as succinyl-Leu-Tyr-|-NHMec, and Leu-Tyr-Leu-|-Tyr-Trp, in which cleavage of the -Tyr-|-Leu- and -Tyr-|-Trp bonds also occurs).. Cleaves peptides in various proteins in a process that requires ATP hydrolysis. Has a chymotrypsin-like activity. Plays a major role in the degradation of misfolded proteins. The chain is ATP-dependent Clp protease proteolytic subunit from Photobacterium profundum (strain SS9).